The sequence spans 353 residues: C-X-C chemokine receptor type 4 (353 aa).

The important for chemokine binding and signaling stretch occupies residues 1 to 22; that stretch reads MEGIRIFTSDNYTEDDLGSGDY. Topologically, residues 1 to 39 are extracellular; sequence MEGIRIFTSDNYTEDDLGSGDYDSMKEPCFREENAHFNR. Asn-11 carries N-linked (GlcNAc...) asparagine glycosylation. Tyr-12 carries the post-translational modification Sulfotyrosine. Ser-19 carries an O-linked (Xyl...) (chondroitin sulfate) serine glycan. Tyr-22 carries the sulfotyrosine modification. Disulfide bonds link Cys-29–Cys-275 and Cys-110–Cys-187. The helical transmembrane segment at 40-64 threads the bilayer; it reads IFLPTVYSIIFLTGIVGNGLVILVM. The Cytoplasmic portion of the chain corresponds to 65–78; that stretch reads GYQKKLRSMTDKYR. The chain crosses the membrane as a helical span at residues 79–100; the sequence is LHLSVADLLFVLTLPFWAVDAV. The segment at 95–98 is chemokine binding; sequence WAVD. Topologically, residues 101 to 111 are extracellular; that stretch reads ANWYFGKFLCK. The helical transmembrane segment at 112–131 threads the bilayer; it reads AVHVIYTVNLYSSVLILAFI. The interval 114–118 is chemokine binding; sequence HVIYT. The Cytoplasmic portion of the chain corresponds to 132–155; it reads SLDRYLAIVHATNSQKPRKLLAEK. An Important for signaling motif is present at residues 134–136; it reads DRY. Residues 136–148 form an involved in dimerization; when bound to chemokine region; it reads YLAIVHATNSQKP. Residues 156–175 traverse the membrane as a helical segment; sequence VVYVGVWLPAVLLTIPDLIF. The Extracellular portion of the chain corresponds to 176–196; it reads ADIKEVDERYICDRFYPSDLW. The interval 187 to 191 is chemokine binding, important for signaling; sequence CDRFY. The segment at 192–211 is involved in dimerization; the sequence is PSDLWLVVFQFQHIVVGLLL. The helical transmembrane segment at 197–217 threads the bilayer; sequence LVVFQFQHIVVGLLLPGIVIL. Residues 218 to 242 lie on the Cytoplasmic side of the membrane; sequence SCYCIIISKLSHSKGYQKRKALKTT. A helical transmembrane segment spans residues 243–262; that stretch reads VILILTFFACWLPYYIGISI. The Extracellular portion of the chain corresponds to 263-283; the sequence is DSFILLEIIQQGCEFESTVHK. Residues 267–269 are involved in dimerization; that stretch reads LLE. A helical transmembrane segment spans residues 284-303; the sequence is WISITEALAFFHCCLNPILY. Topologically, residues 304–353 are cytoplasmic; it reads AFLGAKFKTSAQHALTSVSRGSSLKILSKGKRGGHSSVSTESESSSFHSS. Phosphoserine occurs at positions 320 and 322. Ser-325 and Ser-326 each carry phosphoserine; by PKC and GRK6. Residues 330–353 are disordered; it reads LSKGKRGGHSSVSTESESSSFHSS. Residue Ser-331 is modified to Phosphoserine; by GRK6. A Glycyl lysine isopeptide (Lys-Gly) (interchain with G-Cter in ubiquitin) cross-link involves residue Lys-332. Low complexity predominate over residues 338-353; sequence HSSVSTESESSSFHSS. Ser-340 is modified (phosphoserine; by GRK6). Ser-349 and Ser-352 each carry phosphoserine.

Belongs to the G-protein coupled receptor 1 family. In terms of assembly, monomer. Can form homodimers. Interacts with CD164. Interacts with ARRB2; the interaction is dependent on the C-terminal phosphorylation of CXCR4 and allows activation of MAPK1 and MAPK3. Interacts with ARR3; the interaction is dependent on the C-terminal phosphorylation of CXCR4 and modulates calcium mobilization. Interacts with RNF113A; the interaction, enhanced by CXCL12, promotes CXCR4 ubiquitination and subsequent degradation. Interacts (via the cytoplasmic C-terminal) with ITCH (via the WW domains I and II); the interaction, enhanced by CXCL12, promotes CXCR4 ubiquitination and leads to its degradation. Interacts with extracellular ubiquitin. Interacts with DBN1; this interaction is enhanced by antigenic stimulation. Following LPS binding, may form a complex with GDF5, HSP90AA1 and HSPA8. Post-translationally, phosphorylated on agonist stimulation. Rapidly phosphorylated on serine and threonine residues in the C-terminal. Phosphorylation at Ser-325 and Ser-326 leads to recruitment of ITCH, ubiquitination and protein degradation. Ubiquitinated after ligand binding, leading to its degradation. Ubiquitinated by ITCH at the cell membrane on agonist stimulation. The ubiquitin-dependent mechanism, endosomal sorting complex required for transport (ESCRT), then targets CXCR4 for lysosomal degradation. This process is dependent also on prior Ser-/Thr-phosphorylation in the C-terminal of CXCR4. Also binding of ARRB1 to STAM negatively regulates CXCR4 sorting to lysosomes though modulating ubiquitination of SFR5S. In terms of processing, sulfation is required for efficient binding of CXCL12/SDF-1alpha and promotes its dimerization. Post-translationally, O- and N-glycosylated. N-glycosylation can mask coreceptor function. The O-glycosylation chondroitin sulfate attachment does not affect interaction with CXCL12/SDF-1alpha nor its coreceptor activity. In terms of tissue distribution, brain, heart, kidney, lung and liver.

It localises to the cell membrane. It is found in the cell junction. Its subcellular location is the early endosome. The protein localises to the late endosome. The protein resides in the lysosome. Functionally, receptor for the C-X-C chemokine CXCL12/SDF-1 that transduces a signal by increasing intracellular calcium ion levels and enhancing MAPK1/MAPK3 activation. Involved in the AKT signaling cascade. Plays a role in regulation of cell migration, e.g. during wound healing. Acts as a receptor for extracellular ubiquitin; leading to enhanced intracellular calcium ions and reduced cellular cAMP levels. Binds bacterial lipopolysaccharide (LPS) et mediates LPS-induced inflammatory response, including TNF secretion by monocytes. Involved in hematopoiesis and in cardiac ventricular septum formation. Also plays an essential role in vascularization of the gastrointestinal tract, probably by regulating vascular branching and/or remodeling processes in endothelial cells. Involved in cerebellar development. In the CNS, could mediate hippocampal-neuron survival. In Bos taurus (Bovine), this protein is C-X-C chemokine receptor type 4 (CXCR4).